The sequence spans 71 residues: Large ribosomal subunit protein uL29 (71 aa).

This sequence belongs to the universal ribosomal protein uL29 family. In terms of assembly, part of the 50S ribosomal subunit. Interacts with protein L23.

In terms of biological role, stabilizes the tertiary rRNA structure within the 23S rRNA domain (domain I) to which it binds. Located at the polypeptide exit tunnel on the outside of the subunit. This Haloarcula marismortui (strain ATCC 43049 / DSM 3752 / JCM 8966 / VKM B-1809) (Halobacterium marismortui) protein is Large ribosomal subunit protein uL29 (rpl29).